The primary structure comprises 390 residues: GTPase Obg (390 aa).

Positions 1–159 (MKFVDEAVIR…RHLRLELLLL (159 aa)) constitute an Obg domain. A disordered region spans residues 22–42 (SFRTEKYVPRGGPDGGDGGDG). The segment covering 33–42 (GPDGGDGGDG) has biased composition (gly residues). Residues 160 to 333 (ADVGMLGLPN…LTYNLMTTIE (174 aa)) enclose the OBG-type G domain. GTP-binding positions include 166–173 (GLPNAGKS), 191–195 (FTTLI), 213–216 (DIPG), 283–286 (NKVD), and 314–316 (SAL). Mg(2+)-binding residues include Ser-173 and Thr-193.

The protein belongs to the TRAFAC class OBG-HflX-like GTPase superfamily. OBG GTPase family. Monomer. Mg(2+) is required as a cofactor.

The protein resides in the cytoplasm. Functionally, an essential GTPase which binds GTP, GDP and possibly (p)ppGpp with moderate affinity, with high nucleotide exchange rates and a fairly low GTP hydrolysis rate. Plays a role in control of the cell cycle, stress response, ribosome biogenesis and in those bacteria that undergo differentiation, in morphogenesis control. This chain is GTPase Obg, found in Photobacterium profundum (strain SS9).